The sequence spans 89 residues: MHNTAINVQNRVLSVVRSVLQQNAISADVHPESRLVDIGLSSMGMVELMLKVEAEFDLILPQFEITPENFRSVKAMERMILNQLGSGSG.

One can recognise a Carrier domain in the interval 6–84; that stretch reads INVQNRVLSV…AMERMILNQL (79 aa). Residue Ser42 is modified to O-(pantetheine 4'-phosphoryl)serine.

In terms of processing, 4'-phosphopantetheine is transferred from CoA to a specific serine of the apo-form of this carrier protein.

Functionally, aminoacyl carrier protein. Can be charged with L-glycine via the formation of a thioester bond between the amino acid and the 4'-phosphopantetheinyl prosthetic group, catalyzed by the bll6282 ligase. This chain is Aminoacyl carrier protein 2, found in Bradyrhizobium diazoefficiens (strain JCM 10833 / BCRC 13528 / IAM 13628 / NBRC 14792 / USDA 110).